A 577-amino-acid chain; its full sequence is Arginine--tRNA ligase (577 aa).

Positions A132–H142 match the 'HIGH' region motif.

It belongs to the class-I aminoacyl-tRNA synthetase family. Monomer.

The protein localises to the cytoplasm. It catalyses the reaction tRNA(Arg) + L-arginine + ATP = L-arginyl-tRNA(Arg) + AMP + diphosphate. This chain is Arginine--tRNA ligase, found in Janthinobacterium sp. (strain Marseille) (Minibacterium massiliensis).